The following is a 161-amino-acid chain: Nucleotide-binding protein Aave_1854 (161 aa).

The protein belongs to the YajQ family.

Nucleotide-binding protein. This is Nucleotide-binding protein Aave_1854 from Paracidovorax citrulli (strain AAC00-1) (Acidovorax citrulli).